A 319-amino-acid polypeptide reads, in one-letter code: Sulfate adenylyltransferase subunit 2 (319 aa).

It belongs to the PAPS reductase family. CysD subfamily. Heterodimer composed of CysD, the smaller subunit, and CysN.

It catalyses the reaction sulfate + ATP + H(+) = adenosine 5'-phosphosulfate + diphosphate. It participates in sulfur metabolism; hydrogen sulfide biosynthesis; sulfite from sulfate: step 1/3. Its function is as follows. With CysN forms the ATP sulfurylase (ATPS) that catalyzes the adenylation of sulfate producing adenosine 5'-phosphosulfate (APS) and diphosphate, the first enzymatic step in sulfur assimilation pathway. APS synthesis involves the formation of a high-energy phosphoric-sulfuric acid anhydride bond driven by GTP hydrolysis by CysN coupled to ATP hydrolysis by CysD. This is Sulfate adenylyltransferase subunit 2 from Methylobacterium radiotolerans (strain ATCC 27329 / DSM 1819 / JCM 2831 / NBRC 15690 / NCIMB 10815 / 0-1).